The sequence spans 185 residues: Elongation factor P (185 aa).

Belongs to the elongation factor P family.

It localises to the cytoplasm. It participates in protein biosynthesis; polypeptide chain elongation. Involved in peptide bond synthesis. Stimulates efficient translation and peptide-bond synthesis on native or reconstituted 70S ribosomes in vitro. Probably functions indirectly by altering the affinity of the ribosome for aminoacyl-tRNA, thus increasing their reactivity as acceptors for peptidyl transferase. This chain is Elongation factor P, found in Trichormus variabilis (strain ATCC 29413 / PCC 7937) (Anabaena variabilis).